We begin with the raw amino-acid sequence, 337 residues long: 4-hydroxythreonine-4-phosphate dehydrogenase (337 aa).

2 residues coordinate substrate: His137 and Thr138. Residues His167, His212, and His267 each contribute to the a divalent metal cation site. The substrate site is built by Lys275, Asn284, and Arg293.

Belongs to the PdxA family. As to quaternary structure, homodimer. Zn(2+) serves as cofactor. Requires Mg(2+) as cofactor. It depends on Co(2+) as a cofactor.

The protein resides in the cytoplasm. The enzyme catalyses 4-(phosphooxy)-L-threonine + NAD(+) = 3-amino-2-oxopropyl phosphate + CO2 + NADH. It participates in cofactor biosynthesis; pyridoxine 5'-phosphate biosynthesis; pyridoxine 5'-phosphate from D-erythrose 4-phosphate: step 4/5. Its function is as follows. Catalyzes the NAD(P)-dependent oxidation of 4-(phosphooxy)-L-threonine (HTP) into 2-amino-3-oxo-4-(phosphooxy)butyric acid which spontaneously decarboxylates to form 3-amino-2-oxopropyl phosphate (AHAP). This is 4-hydroxythreonine-4-phosphate dehydrogenase from Ectopseudomonas mendocina (strain ymp) (Pseudomonas mendocina).